The following is a 247-amino-acid chain: NH(3)-dependent NAD(+) synthetase (247 aa).

An ATP-binding site is contributed by 29–36 (GISGGIDS). Mg(2+) is bound at residue aspartate 35. Arginine 120 is a binding site for deamido-NAD(+). Threonine 140 is a binding site for ATP. A Mg(2+)-binding site is contributed by glutamate 145. Residues lysine 153 and aspartate 160 each coordinate deamido-NAD(+). Positions 169 and 191 each coordinate ATP. 237–238 (HK) provides a ligand contact to deamido-NAD(+).

Belongs to the NAD synthetase family. Homodimer.

The catalysed reaction is deamido-NAD(+) + NH4(+) + ATP = AMP + diphosphate + NAD(+) + H(+). Its pathway is cofactor biosynthesis; NAD(+) biosynthesis; NAD(+) from deamido-NAD(+) (ammonia route): step 1/1. In terms of biological role, catalyzes the ATP-dependent amidation of deamido-NAD to form NAD. Uses ammonia as a nitrogen source. In Alkaliphilus metalliredigens (strain QYMF), this protein is NH(3)-dependent NAD(+) synthetase.